A 179-amino-acid chain; its full sequence is Large ribosomal subunit protein uL6 (179 aa).

It belongs to the universal ribosomal protein uL6 family. Part of the 50S ribosomal subunit.

Functionally, this protein binds to the 23S rRNA, and is important in its secondary structure. It is located near the subunit interface in the base of the L7/L12 stalk, and near the tRNA binding site of the peptidyltransferase center. The protein is Large ribosomal subunit protein uL6 of Clostridium perfringens (strain ATCC 13124 / DSM 756 / JCM 1290 / NCIMB 6125 / NCTC 8237 / Type A).